Here is a 172-residue protein sequence, read N- to C-terminus: Shikimate kinase (172 aa).

ATP is bound at residue 11–16 (GAGKST). Mg(2+) is bound at residue serine 15. Residues aspartate 33, arginine 57, and glycine 79 each contribute to the substrate site. Arginine 117 serves as a coordination point for ATP. Arginine 136 serves as a coordination point for substrate. Arginine 153 is a binding site for ATP.

It belongs to the shikimate kinase family. In terms of assembly, monomer. Mg(2+) serves as cofactor.

It is found in the cytoplasm. The catalysed reaction is shikimate + ATP = 3-phosphoshikimate + ADP + H(+). Its pathway is metabolic intermediate biosynthesis; chorismate biosynthesis; chorismate from D-erythrose 4-phosphate and phosphoenolpyruvate: step 5/7. Functionally, catalyzes the specific phosphorylation of the 3-hydroxyl group of shikimic acid using ATP as a cosubstrate. This chain is Shikimate kinase, found in Pseudomonas paraeruginosa (strain DSM 24068 / PA7) (Pseudomonas aeruginosa (strain PA7)).